The chain runs to 123 residues: Fluoride-specific ion channel FluC (123 aa).

Helical transmembrane passes span 7 to 27 (MAIA…SGLL), 39 to 59 (MVNS…FWGF), 68 to 88 (FFGT…YETF), and 101 to 121 (LNIL…FMLA). Na(+)-binding residues include Gly-75 and Ser-78.

It belongs to the fluoride channel Fluc/FEX (TC 1.A.43) family.

The protein resides in the cell membrane. It catalyses the reaction fluoride(in) = fluoride(out). With respect to regulation, na(+) is not transported, but it plays an essential structural role and its presence is essential for fluoride channel function. Fluoride-specific ion channel. Important for reducing fluoride concentration in the cell, thus reducing its toxicity. The protein is Fluoride-specific ion channel FluC of Thermococcus kodakarensis (strain ATCC BAA-918 / JCM 12380 / KOD1) (Pyrococcus kodakaraensis (strain KOD1)).